The primary structure comprises 426 residues: MKHLTEMVRQHKAGKTNAIYAVCSAHPLVLEAAIRYASANQTPLLIEATSNQVDQFGGYTGMTPADFRGFVCQLADSLNFPQDALILGGDHLGPNRWQNLPAAQAMANADDLIKSYVAAGFKKIHLDCSMSCQDDPIPLTDDIVAERAARLAKVAEETCREHFGEADLEYVIGTEVPVPGGAHETLSELAVTTPDAARATLEAHRHAFEKQGLNAIWPRIIALVVQPGVEFDHTNVIDYQPAKASALSQMVENYETLIFEAHSTDYQTPQSLRQLVIDHFAILKVGPALTFALREALFSLAAIEEELVPAKACSGLRQVLENVMLDRPEYWQSHYHGDGNARRLARGYSYSDRVRYYWPDSQIDDAFAHLVRNLADSPIPLPLISQYLPLQYVKVRSGELQPTPRELIINHIQDILAQYHTACEGQ.

This sequence belongs to the GatZ/KbaZ family. KbaZ subfamily. As to quaternary structure, forms a complex with KbaY.

The protein operates within carbohydrate metabolism; D-tagatose 6-phosphate degradation; D-glyceraldehyde 3-phosphate and glycerone phosphate from D-tagatose 6-phosphate: step 2/2. Functionally, component of the tagatose-1,6-bisphosphate aldolase KbaYZ that is required for full activity and stability of the Y subunit. Could have a chaperone-like function for the proper and stable folding of KbaY. When expressed alone, KbaZ does not show any aldolase activity. The polypeptide is D-tagatose-1,6-bisphosphate aldolase subunit KbaZ (Shigella flexneri).